The chain runs to 194 residues: MGSDETKSTLDTERSTVPRTGTTTKSCSITQVVLRFVLFAATLTSIVVMVTSKQTKNIFIPGTPIRIPAAKFTNSPALIYFVVALSVACFYSIVSTFVTVSAFKKHSCSAILLLNLAIMDAVMVGIVASATGAGGGVAYLGLKGNKEVRWGKICNIYDKFCRHVGGAIAVSLFASVILLLLSIISVLSLYKKIR.

Over residues 1-16 (MGSDETKSTLDTERST) the composition is skewed to basic and acidic residues. The segment at 1-23 (MGSDETKSTLDTERSTVPRTGTT) is disordered. Topologically, residues 1–31 (MGSDETKSTLDTERSTVPRTGTTTKSCSITQ) are cytoplasmic. Residues 32 to 52 (VVLRFVLFAATLTSIVVMVTS) traverse the membrane as a helical segment. The Extracellular segment spans residues 53-77 (KQTKNIFIPGTPIRIPAAKFTNSPA). Residues 78-98 (LIYFVVALSVACFYSIVSTFV) traverse the membrane as a helical segment. Residues 99–109 (TVSAFKKHSCS) lie on the Cytoplasmic side of the membrane. The helical transmembrane segment at 110–130 (AILLLNLAIMDAVMVGIVASA) threads the bilayer. Residues 131–163 (TGAGGGVAYLGLKGNKEVRWGKICNIYDKFCRH) lie on the Extracellular side of the membrane. Residues 164-184 (VGGAIAVSLFASVILLLLSII) traverse the membrane as a helical segment. The Cytoplasmic portion of the chain corresponds to 185–194 (SVLSLYKKIR).

This sequence belongs to the Casparian strip membrane proteins (CASP) family. As to quaternary structure, homodimer and heterodimers.

The protein localises to the cell membrane. The protein is CASP-like protein 1D1 of Arabidopsis lyrata subsp. lyrata (Lyre-leaved rock-cress).